The primary structure comprises 92 residues: Small ribosomal subunit protein bS18 (92 aa).

Belongs to the bacterial ribosomal protein bS18 family. Part of the 30S ribosomal subunit. Forms a tight heterodimer with protein bS6.

Its function is as follows. Binds as a heterodimer with protein bS6 to the central domain of the 16S rRNA, where it helps stabilize the platform of the 30S subunit. This is Small ribosomal subunit protein bS18 from Chlorobium chlorochromatii (strain CaD3).